The chain runs to 285 residues: Phosphatidylserine decarboxylase proenzyme (285 aa).

Catalysis depends on charge relay system; for autoendoproteolytic cleavage activity residues D89, H146, and S252. S252 serves as the catalytic Schiff-base intermediate with substrate; via pyruvic acid; for decarboxylase activity. Residue S252 is modified to Pyruvic acid (Ser); by autocatalysis.

The protein belongs to the phosphatidylserine decarboxylase family. PSD-B subfamily. Prokaryotic type I sub-subfamily. Heterodimer of a large membrane-associated beta subunit and a small pyruvoyl-containing alpha subunit. The cofactor is pyruvate. Is synthesized initially as an inactive proenzyme. Formation of the active enzyme involves a self-maturation process in which the active site pyruvoyl group is generated from an internal serine residue via an autocatalytic post-translational modification. Two non-identical subunits are generated from the proenzyme in this reaction, and the pyruvate is formed at the N-terminus of the alpha chain, which is derived from the carboxyl end of the proenzyme. The autoendoproteolytic cleavage occurs by a canonical serine protease mechanism, in which the side chain hydroxyl group of the serine supplies its oxygen atom to form the C-terminus of the beta chain, while the remainder of the serine residue undergoes an oxidative deamination to produce ammonia and the pyruvoyl prosthetic group on the alpha chain. During this reaction, the Ser that is part of the protease active site of the proenzyme becomes the pyruvoyl prosthetic group, which constitutes an essential element of the active site of the mature decarboxylase.

The protein localises to the cell membrane. The enzyme catalyses a 1,2-diacyl-sn-glycero-3-phospho-L-serine + H(+) = a 1,2-diacyl-sn-glycero-3-phosphoethanolamine + CO2. It functions in the pathway phospholipid metabolism; phosphatidylethanolamine biosynthesis; phosphatidylethanolamine from CDP-diacylglycerol: step 2/2. Functionally, catalyzes the formation of phosphatidylethanolamine (PtdEtn) from phosphatidylserine (PtdSer). The sequence is that of Phosphatidylserine decarboxylase proenzyme from Vibrio campbellii (strain ATCC BAA-1116).